The sequence spans 82 residues: Cyclin-dependent protein kinase inhibitor SMR5 (82 aa).

The segment at 1-26 (MEEKNYDDGDTVTVDDDYQMGCTTPT) is disordered. The segment covering 8 to 18 (DGDTVTVDDDY) has biased composition (acidic residues).

Interacts with CDKA-1 and D-type cyclins. Expressed in columella cells in the roots and in root meristems after induction.

Functionally, probable cyclin-dependent protein kinase (CDK) inhibitor that functions as a repressor of mitosis in the endoreduplication cell cycle. Acts as a potent cell cycle inhibitor, regulating a hydroxyurea-dependent checkpoint in leaves. Essential to activate a high-light-dependent cell cycle checkpoint. This Arabidopsis thaliana (Mouse-ear cress) protein is Cyclin-dependent protein kinase inhibitor SMR5.